The chain runs to 290 residues: MSYSPYIGRFAPSPSGSLHFGSLIAALGSFLRARSQGGQWLVRIEDIDPPREVPGAADDILRTLDAFGLHWDGKLMYQSQRTEAYQAKIDVLLASGEAYFCQCTRKQIQAIGGVYDGRCRQLGHQSGAIRIVNRARVNHFHDGLMGEVAVPDSFAAEDFIIKRSDGLYAYQLAVVMDDAKTGITEVVRGADLIEASCRQLSLFNQFGYQAPAWMHLPLACAEAGFKLSKQNHATPVDKANPLPALKAALAFLGQPIPDAHSVESLLAQAVADFSVASIPRRREILIDGGG.

Residues 9–13 (RFAPS) and Glu45 each bind L-glutamate. The short motif at 12–22 (PSPSGSLHFGS) is the 'HIGH' region element. Zn(2+) is bound by residues Cys101, Cys103, Tyr115, and Cys119. L-glutamate-binding residues include Tyr170 and Arg188. The 'KMSKS' region signature appears at 226–230 (KLSKQ). Lys229 contributes to the ATP binding site.

This sequence belongs to the class-I aminoacyl-tRNA synthetase family. GluQ subfamily. Requires Zn(2+) as cofactor.

Catalyzes the tRNA-independent activation of glutamate in presence of ATP and the subsequent transfer of glutamate onto a tRNA(Asp). Glutamate is transferred on the 2-amino-5-(4,5-dihydroxy-2-cyclopenten-1-yl) moiety of the queuosine in the wobble position of the QUC anticodon. This Shewanella amazonensis (strain ATCC BAA-1098 / SB2B) protein is Glutamyl-Q tRNA(Asp) synthetase.